The following is a 601-amino-acid chain: Probable serine/threonine-protein kinase WNK3 (601 aa).

One can recognise a Protein kinase domain in the interval 34 to 291; the sequence is GRFNEILGKG…ARELLDDPFL (258 aa). ATP-binding positions include 114-117 and lysine 164; that span reads TELF. Aspartate 181 (proton acceptor) is an active-site residue. Disordered stretches follow at residues 470–498 and 551–601; these read GWRP…PGGA and ADDD…SEQP. A compositionally biased stretch (acidic residues) spans 477–493; the sequence is TDDDDDDDLVGGGDDPD. Residues 560–571 show a composition bias toward polar residues; it reads LQGSSSDTGGSN. A compositionally biased stretch (basic and acidic residues) spans 572–583; the sequence is HEQHAMGKDKEV.

The protein belongs to the protein kinase superfamily. Ser/Thr protein kinase family. WNK subfamily.

It carries out the reaction L-seryl-[protein] + ATP = O-phospho-L-seryl-[protein] + ADP + H(+). The catalysed reaction is L-threonyl-[protein] + ATP = O-phospho-L-threonyl-[protein] + ADP + H(+). The chain is Probable serine/threonine-protein kinase WNK3 (WNK3) from Oryza sativa subsp. japonica (Rice).